We begin with the raw amino-acid sequence, 555 residues long: 2-isopropylmalate synthase (555 aa).

Residues 30–303 form the Pyruvate carboxyltransferase domain; it reads PIWCSVDLRD…DPGLDCTDIN (274 aa). The Mg(2+) site is built by Asp39, His242, His244, and Asn278. Residues 437 to 555 are regulatory domain; sequence QPDARIKFVD…VSAANRVIAK (119 aa).

This sequence belongs to the alpha-IPM synthase/homocitrate synthase family. LeuA type 2 subfamily. As to quaternary structure, homodimer. Mg(2+) is required as a cofactor.

It is found in the cytoplasm. It carries out the reaction 3-methyl-2-oxobutanoate + acetyl-CoA + H2O = (2S)-2-isopropylmalate + CoA + H(+). Its pathway is amino-acid biosynthesis; L-leucine biosynthesis; L-leucine from 3-methyl-2-oxobutanoate: step 1/4. Catalyzes the condensation of the acetyl group of acetyl-CoA with 3-methyl-2-oxobutanoate (2-ketoisovalerate) to form 3-carboxy-3-hydroxy-4-methylpentanoate (2-isopropylmalate). In Brucella melitensis biotype 1 (strain ATCC 23456 / CCUG 17765 / NCTC 10094 / 16M), this protein is 2-isopropylmalate synthase.